A 312-amino-acid polypeptide reads, in one-letter code: Serine acetyltransferase 5 (312 aa).

A compositionally biased stretch (basic and acidic residues) spans 1-17; it reads MPPAGELRHQSPSKEKL. The interval 1–25 is disordered; that stretch reads MPPAGELRHQSPSKEKLSSVTQSDE.

Belongs to the transferase hexapeptide repeat family. In terms of assembly, homomultimer. As to expression, mostly expressed in stems, flowers and siliques. Localized in vascular tissues, particularly in phloem.

The protein localises to the cytoplasm. It carries out the reaction L-serine + acetyl-CoA = O-acetyl-L-serine + CoA. The protein operates within amino-acid biosynthesis; L-cysteine biosynthesis; L-cysteine from L-serine: step 1/2. Its activity is regulated as follows. Feedback inhibitions by L-Ser and acetyl-CoA. This chain is Serine acetyltransferase 5 (SAT5), found in Arabidopsis thaliana (Mouse-ear cress).